The chain runs to 403 residues: Argininosuccinate synthase (403 aa).

Residues 13–21 (AYSGGLDTS) and Ala-40 each bind ATP. L-citrulline-binding residues include Tyr-91 and Ser-96. Gly-121 contributes to the ATP binding site. L-aspartate is bound by residues Thr-123, Asn-127, and Asp-128. Asn-127 contacts L-citrulline. L-citrulline contacts are provided by Arg-131, Ser-180, Ser-189, Glu-265, and Tyr-277.

This sequence belongs to the argininosuccinate synthase family. Type 1 subfamily. In terms of assembly, homotetramer.

It localises to the cytoplasm. The enzyme catalyses L-citrulline + L-aspartate + ATP = 2-(N(omega)-L-arginino)succinate + AMP + diphosphate + H(+). Its pathway is amino-acid biosynthesis; L-arginine biosynthesis; L-arginine from L-ornithine and carbamoyl phosphate: step 2/3. The chain is Argininosuccinate synthase from Leptospira interrogans serogroup Icterohaemorrhagiae serovar Lai (strain 56601).